The sequence spans 215 residues: Oligoribonuclease (215 aa).

The Exonuclease domain occupies 5–170; that stretch reads LVWIDCEMTG…ADIHESIREL (166 aa). Residue Tyr-127 is part of the active site.

This sequence belongs to the oligoribonuclease family.

It is found in the cytoplasm. In terms of biological role, 3'-to-5' exoribonuclease specific for small oligoribonucleotides. This is Oligoribonuclease from Mycobacterium ulcerans (strain Agy99).